The primary structure comprises 216 residues: CRIB domain-containing protein RIC7 (216 aa).

A CRIB domain is found at 36-49 (IGNPTDVKHVAHIG). The tract at residues 52-216 (GPSDNATAPS…PQFEDDRNGF (165 aa)) is disordered. Residues 108–121 (SSSEKGSPTKERSD) show a composition bias toward basic and acidic residues.

In terms of assembly, interacts with ARAC4/ROP2 and ARAC11/ROP1. Expressed in roots, leaves, guard cells, stems, flowers, siliques and pollen.

The protein resides in the nucleus. It is found in the cytoplasm. The protein localises to the cell membrane. Its function is as follows. Functions as a downstream effector of Rho-related GTP binding proteins of the 'Rho of Plants' (ROPs) family. Participates in the propagation of ROP GTPase signals in specific cellular responses. Functions as a downstream effector of active ARAC4/ROP2 GTPase which is involved in the prevention of excessive stomatal opening upon light stimulation. Is involved in pollen tube growth regulation through its interaction with ARAC11/ROP1. The protein is CRIB domain-containing protein RIC7 (RIC7) of Arabidopsis thaliana (Mouse-ear cress).